The chain runs to 426 residues: LIM/homeobox protein Lhx2 (426 aa).

Residues 14–24 (VIDEMDRRQER) show a composition bias toward basic and acidic residues. The segment at 14–42 (VIDEMDRRQERGSGISSAIDRGDTETTMP) is disordered. LIM zinc-binding domains follow at residues 52 to 104 (CAGC…CKED) and 114 to 167 (CARC…CRLH). Positions 248-268 (DAEHLDRDQPYPSSQKTKRMR) are disordered. Residues 264 to 323 (TKRMRTSFKHHQLRTMKSYFAINHNPDAKDLKQLAQKTGLTKRVLQVWFQNARAKFRRNL) constitute a DNA-binding region (homeobox). Positions 305–321 (KRVLQVWFQNARAKFRR) match the Nuclear localization signal motif. The segment covering 326-354 (QENTGVDKTSDATLQTGTPSGPASELSNA) has biased composition (polar residues). The disordered stretch occupies residues 326 to 370 (QENTGVDKTSDATLQTGTPSGPASELSNASLSPSSTPTTLTDLTS). Over residues 355–370 (SLSPSSTPTTLTDLTS) the composition is skewed to low complexity.

Interacts (via LIM domains) with CITED2. Interacts with POU4F2. As to expression, found in discrete regions of the developing CNS, primarily in diencephalic and telencephalic structures and a subset of lymphoid tissues. Also found in embryonic spinal cord and fetal liver.

The protein resides in the nucleus. Functionally, acts as a transcriptional activator. Stimulates the promoter of the alpha-glycoprotein gene. Transcriptional regulatory protein involved in the control of cell differentiation in developing lymphoid and neural cell types. This Rattus norvegicus (Rat) protein is LIM/homeobox protein Lhx2 (Lhx2).